Here is a 919-residue protein sequence, read N- to C-terminus: Protein phosphatase 1 regulatory subunit 37 (919 aa).

LRR repeat units lie at residues 340-361, 368-388, 396-417, 425-445, 454-474, and 482-502; these read SLQY…FVAR, SLTV…MLLA, NLRE…AQLG, NIQI…AYVC, GLVT…GYLA, and SLET…HKLK. Disordered stretches follow at residues 626-716 and 790-866; these read ATED…TIPS and APSQ…APLP. A compositionally biased stretch (acidic residues) spans 631-640; it reads THEEEEEEEA. Basic and acidic residues predominate over residues 641–658; sequence SPLKKIEEETTDALKDAT. Residues 677–690 show a composition bias toward acidic residues; sequence PQDDSDSDTEDEET. The span at 691 to 701 shows a compositional bias: low complexity; the sequence is PTNTSLTSTSP. Composition is skewed to polar residues over residues 791–801 and 811–837; these read PSQTQNSTQPT and DAQQ…LTES. The stretch at 833-861 forms a coiled coil; it reads QLTESVSEEEQKKAETLNNEADINEDANT.

The protein belongs to the PPP1R37 family.

Functionally, may inhibit phosphatase activity of protein phosphatase 1 (PP1) complexes. This is Protein phosphatase 1 regulatory subunit 37 (ppp1r37) from Danio rerio (Zebrafish).